A 207-amino-acid chain; its full sequence is Outer-membrane lipoprotein LolB (207 aa).

An N-terminal signal peptide occupies residues 1–21 (MTLPDFRLIRLLPLASLVLTA). The N-palmitoyl cysteine moiety is linked to residue Cys-22. Cys-22 carries the S-diacylglycerol cysteine lipid modification.

This sequence belongs to the LolB family. Monomer.

The protein resides in the cell outer membrane. Plays a critical role in the incorporation of lipoproteins in the outer membrane after they are released by the LolA protein. The chain is Outer-membrane lipoprotein LolB from Citrobacter koseri (strain ATCC BAA-895 / CDC 4225-83 / SGSC4696).